The sequence spans 126 residues: Late histone H2A.3, gonadal (126 aa).

The segment covering 1–18 (MSGRGKGAKAKGKAKSRS) has biased composition (basic residues). The interval 1 to 21 (MSGRGKGAKAKGKAKSRSSRA) is disordered. S2 is modified (N-acetylserine). Phosphoserine is present on S2. An N5-methylglutamine modification is found at Q104. K119 participates in a covalent cross-link: Glycyl lysine isopeptide (Lys-Gly) (interchain with G-Cter in ubiquitin).

The protein belongs to the histone H2A family. In terms of assembly, the nucleosome is a histone octamer containing two molecules each of H2A, H2B, H3 and H4 assembled in one H3-H4 heterotetramer and two H2A-H2B heterodimers. The octamer wraps approximately 147 bp of DNA. Monoubiquitination of Lys-119 gives a specific tag for epigenetic transcriptional repression. Post-translationally, phosphorylation of Ser-2 directly represses transcription.

The protein resides in the nucleus. It is found in the chromosome. Core component of nucleosome. Nucleosomes wrap and compact DNA into chromatin, limiting DNA accessibility to the cellular machineries which require DNA as a template. Histones thereby play a central role in transcription regulation, DNA repair, DNA replication and chromosomal stability. DNA accessibility is regulated via a complex set of post-translational modifications of histones, also called histone code, and nucleosome remodeling. This Psammechinus miliaris (Green sea urchin) protein is Late histone H2A.3, gonadal.